The following is a 218-amino-acid chain: 1-Cys peroxiredoxin PER1 (218 aa).

The Thioredoxin domain occupies 4-164 (LTIGDTVPNL…VVRAVDSLLT (161 aa)). Cysteine 46 (cysteine sulfenic acid (-SOH) intermediate) is an active-site residue. A Bipartite nuclear localization signal motif is present at residues 194–217 (KKMFPQGFETADLPSKKGYLRFTK).

It belongs to the peroxiredoxin family. Prx6 subfamily. Embryo and aleurone cells.

It is found in the nucleus. Its subcellular location is the cytoplasm. The catalysed reaction is a hydroperoxide + [thioredoxin]-dithiol = an alcohol + [thioredoxin]-disulfide + H2O. In terms of biological role, thiol-specific peroxidase that catalyzes the reduction of hydrogen peroxide and organic hydroperoxides to water and alcohols, respectively. Seems to contribute to the inhibition of germination during stress. The polypeptide is 1-Cys peroxiredoxin PER1 (PER1) (Hordeum vulgare (Barley)).